The sequence spans 632 residues: Chaperone protein DnaK (632 aa).

The residue at position 199 (T199) is a Phosphothreonine; by autocatalysis. Residues 597-611 (AAQQAGQAEGQAAQE) are compositionally biased toward low complexity. The tract at residues 597–632 (AAQQAGQAEGQAAQEPSQSTGNAQAEATDAEYEEVK) is disordered. A compositionally biased stretch (polar residues) spans 612–621 (PSQSTGNAQA).

It belongs to the heat shock protein 70 family.

Acts as a chaperone. The sequence is that of Chaperone protein DnaK from Amoebophilus asiaticus (strain 5a2).